A 190-amino-acid chain; its full sequence is MPTPTKGPRLGGGPAHERLMLANLAAALFEHKRITTTVTKAKRLKPYAERLVTFAKRGDLASRRRVLGLISNKGVVHELFTDIAQAVENRDGGYTRITKIGNRKGDNAPMAVIELVLEPVSAKQAVVAEATQAAAKAAPAAEEAPAEEAPAAEEAATEEAPAAEETATEEAAAEEAPAAEEAPAEEKDAK.

The span at 135 to 165 shows a compositional bias: low complexity; sequence AKAAPAAEEAPAEEAPAAEEAATEEAPAAEE. Residues 135–190 are disordered; sequence AKAAPAAEEAPAEEAPAAEEAATEEAPAAEETATEEAAAEEAPAAEEAPAEEKDAK.

This sequence belongs to the bacterial ribosomal protein bL17 family. As to quaternary structure, part of the 50S ribosomal subunit. Contacts protein L32.

In Pseudarthrobacter chlorophenolicus (strain ATCC 700700 / DSM 12829 / CIP 107037 / JCM 12360 / KCTC 9906 / NCIMB 13794 / A6) (Arthrobacter chlorophenolicus), this protein is Large ribosomal subunit protein bL17.